A 134-amino-acid chain; its full sequence is uncharacterized protein (134 aa).

The 61-residue stretch at 10 to 70 (KETRQRIIDA…AVLASRQHPL (61 aa)) folds into the HTH tetR-type domain. The H-T-H motif DNA-binding region spans 33 to 52 (TLDQIARKAGVTRGAVYWHF).

Functionally, unknown, does not seem to be involved in regulation of the ttgGHI or ttgVW operons. This is an uncharacterized protein from Pseudomonas putida (strain DOT-T1E).